Consider the following 431-residue polypeptide: Serine hydroxymethyltransferase (431 aa).

(6S)-5,6,7,8-tetrahydrofolate-binding positions include L128 and 132 to 134 (GHL). K237 is subject to N6-(pyridoxal phosphate)lysine. E253 provides a ligand contact to (6S)-5,6,7,8-tetrahydrofolate.

This sequence belongs to the SHMT family. Homodimer. Pyridoxal 5'-phosphate is required as a cofactor.

It localises to the cytoplasm. It carries out the reaction (6R)-5,10-methylene-5,6,7,8-tetrahydrofolate + glycine + H2O = (6S)-5,6,7,8-tetrahydrofolate + L-serine. The protein operates within one-carbon metabolism; tetrahydrofolate interconversion. It functions in the pathway amino-acid biosynthesis; glycine biosynthesis; glycine from L-serine: step 1/1. Functionally, catalyzes the reversible interconversion of serine and glycine with tetrahydrofolate (THF) serving as the one-carbon carrier. This reaction serves as the major source of one-carbon groups required for the biosynthesis of purines, thymidylate, methionine, and other important biomolecules. Also exhibits THF-independent aldolase activity toward beta-hydroxyamino acids, producing glycine and aldehydes, via a retro-aldol mechanism. The sequence is that of Serine hydroxymethyltransferase from Cereibacter sphaeroides (strain ATCC 17023 / DSM 158 / JCM 6121 / CCUG 31486 / LMG 2827 / NBRC 12203 / NCIMB 8253 / ATH 2.4.1.) (Rhodobacter sphaeroides).